We begin with the raw amino-acid sequence, 391 residues long: Large ribosomal subunit protein uL3 (391 aa).

A compositionally biased stretch (basic and acidic residues) spans 1–10 (MSHRKFEAPR). The tract at residues 1–41 (MSHRKFEAPRHGSLGFRPRRRTRHHRGRCRSFPKDDPSKKP) is disordered. The span at 17 to 31 (RPRRRTRHHRGRCRS) shows a compositional bias: basic residues.

This sequence belongs to the universal ribosomal protein uL3 family.

It localises to the cytoplasm. Functionally, the L3 protein is a component of the large subunit of cytoplasmic ribosomes. In Tetrahymena thermophila, this protein is Large ribosomal subunit protein uL3 (RPL3).